We begin with the raw amino-acid sequence, 116 residues long: Nitrogenase-stabilizing/protective protein NifW (116 aa).

This sequence belongs to the NifW family. In terms of assembly, homotrimer; associates with NifD.

Functionally, may protect the nitrogenase Fe-Mo protein from oxidative damage. This chain is Nitrogenase-stabilizing/protective protein NifW, found in Rhodopseudomonas palustris (strain ATCC BAA-98 / CGA009).